The following is a 426-amino-acid chain: Histidine--tRNA ligase (426 aa).

The protein belongs to the class-II aminoacyl-tRNA synthetase family. Homodimer.

Its subcellular location is the cytoplasm. It carries out the reaction tRNA(His) + L-histidine + ATP = L-histidyl-tRNA(His) + AMP + diphosphate + H(+). The protein is Histidine--tRNA ligase of Lactiplantibacillus plantarum (strain ATCC BAA-793 / NCIMB 8826 / WCFS1) (Lactobacillus plantarum).